We begin with the raw amino-acid sequence, 571 residues long: MGNSPSYNPPAGISPSDWLNLLQSAQRLNPRPSPSDFTDLKNYIHWFHKTQKKPWTFTSGGPTSCPPGRFGRVPLVLATLNEVLSNEGGAPGASAPEEQPPPYDPPAILPIISEGNRNRHRAWALRELQDIKKEIENKAPGSQVWIQTLRLAILQADPTPADLEQLCQYIASPVDQTAHMTSLTAAIAAAEAANTLQGFNPKTGTLTQQSAQPNAGDLRSQYQNLWLQAGKNLPTRPSAPWSTIVQGPAESSVEFVNRLQISLADNLPDGVPKEPIIDSLSYANANRECQQILQGRGPVAAVGQKLQACAQWAPKNKQPALLVHTPGPKMPGPRQPAPKRPPPGPCYRCLKEGHWARDCPTKATGPPPGPCPICKDPSHWKRDCPTLKSKNKLIEGGLSAPQTITPITDSLSEAELECLLSIPLARSRPSVAVYLSGPWLQPSQNQALMLVDTGAENTVLPQNWLVRDYPRIPAAVLGAGGVSRNRYNWLQGPLTLALKPEGPFITIPKILVDTSDKWQILGRDVPSRLQASISIPEEVRPPVVGVLDTPPSHIGLEHLPPPPEVPQFPLN.

Glycine 2 carries N-myristoyl glycine; by host lipidation. The PPXY motif signature appears at 100-103; the sequence is PPPY. Repeats lie at residues 342–362 and 367–387; these read PPGPCYRCLKEGHWARDCPTK and PPGPCPICKDPSHWKRDCPTL. 2 CCHC-type zinc fingers span residues 345–362 and 370–387; these read PCYRCLKEGHWARDCPTK and PCPICKDPSHWKRDCPTL. Residue threonine 453 is the Protease; shared with dimeric partner of the active site.

As to quaternary structure, homodimer; the homodimers are part of the immature particles. Interacts with human TSG101 and NEDD4; these interactions are essential for budding and release of viral particles. Homodimer; further assembles as homohexamers. In terms of processing, specific enzymatic cleavages by the viral protease yield mature proteins. The polyprotein is cleaved during and after budding, this process is termed maturation. The protease is autoproteolytically processed at its N- and C-termini. Myristoylated. Myristoylation of the matrix (MA) domain mediates the transport and binding of Gag polyproteins to the host plasma membrane and is required for the assembly of viral particles.

The protein localises to the virion. Its function is as follows. The matrix domain targets Gag, Gag-Pro and Gag-Pro-Pol polyproteins to the plasma membrane via a multipartite membrane binding signal, that includes its myristoylated N-terminus. Matrix protein. In terms of biological role, forms the spherical core of the virus that encapsulates the genomic RNA-nucleocapsid complex. Functionally, binds strongly to viral nucleic acids and promote their aggregation. Also destabilizes the nucleic acids duplexes via highly structured zinc-binding motifs. Its function is as follows. The aspartyl protease mediates proteolytic cleavages of Gag and Gag-Pol polyproteins during or shortly after the release of the virion from the plasma membrane. Cleavages take place as an ordered, step-wise cascade to yield mature proteins. This process is called maturation. Displays maximal activity during the budding process just prior to particle release from the cell. This chain is Gag-Pro polyprotein, found in Bovine leukemia virus (isolate Japanese BLV-1) (BLV).